Consider the following 541-residue polypeptide: Chaperonin GroEL (541 aa).

Residues 29-32 (TLGP), 86-90 (DGTTT), G413, 476-478 (NAA), and D492 contribute to the ATP site.

This sequence belongs to the chaperonin (HSP60) family. As to quaternary structure, forms a cylinder of 14 subunits composed of two heptameric rings stacked back-to-back. Interacts with the co-chaperonin GroES.

Its subcellular location is the cytoplasm. The catalysed reaction is ATP + H2O + a folded polypeptide = ADP + phosphate + an unfolded polypeptide.. Functionally, together with its co-chaperonin GroES, plays an essential role in assisting protein folding. The GroEL-GroES system forms a nano-cage that allows encapsulation of the non-native substrate proteins and provides a physical environment optimized to promote and accelerate protein folding. In Streptococcus equi subsp. zooepidemicus (strain H70), this protein is Chaperonin GroEL.